The sequence spans 321 residues: tRNA dimethylallyltransferase (321 aa).

An ATP-binding site is contributed by 25 to 32 (GPTASGKS). 27–32 (TASGKS) provides a ligand contact to substrate. The interval 50-53 (DSMQ) is interaction with substrate tRNA.

Belongs to the IPP transferase family. Monomer. Requires Mg(2+) as cofactor.

It carries out the reaction adenosine(37) in tRNA + dimethylallyl diphosphate = N(6)-dimethylallyladenosine(37) in tRNA + diphosphate. In terms of biological role, catalyzes the transfer of a dimethylallyl group onto the adenine at position 37 in tRNAs that read codons beginning with uridine, leading to the formation of N6-(dimethylallyl)adenosine (i(6)A). The sequence is that of tRNA dimethylallyltransferase from Rhodopseudomonas palustris (strain ATCC BAA-98 / CGA009).